The primary structure comprises 400 residues: Riboflavin biosynthesis protein RibBA (400 aa).

The segment at methionine 1 to arginine 202 is DHBP synthase. D-ribulose 5-phosphate-binding positions include arginine 28–glutamate 29, aspartate 33, arginine 141–threonine 145, and glutamate 165. Position 29 (glutamate 29) interacts with Mg(2+). Histidine 144 provides a ligand contact to Mg(2+). The segment at threonine 203–glycine 400 is GTP cyclohydrolase II. Arginine 253–glutamate 257 is a binding site for GTP. Cysteine 258, cysteine 269, and cysteine 271 together coordinate Zn(2+). GTP-binding positions include glutamine 274, glutamate 297–arginine 299, and threonine 319. Aspartate 331 functions as the Proton acceptor; for GTP cyclohydrolase activity in the catalytic mechanism. Arginine 333 functions as the Nucleophile; for GTP cyclohydrolase activity in the catalytic mechanism. The GTP site is built by threonine 354 and lysine 359.

This sequence in the N-terminal section; belongs to the DHBP synthase family. In the C-terminal section; belongs to the GTP cyclohydrolase II family. Requires Mg(2+) as cofactor. The cofactor is Mn(2+). Zn(2+) serves as cofactor.

It carries out the reaction D-ribulose 5-phosphate = (2S)-2-hydroxy-3-oxobutyl phosphate + formate + H(+). The catalysed reaction is GTP + 4 H2O = 2,5-diamino-6-hydroxy-4-(5-phosphoribosylamino)-pyrimidine + formate + 2 phosphate + 3 H(+). It functions in the pathway cofactor biosynthesis; riboflavin biosynthesis; 2-hydroxy-3-oxobutyl phosphate from D-ribulose 5-phosphate: step 1/1. The protein operates within cofactor biosynthesis; riboflavin biosynthesis; 5-amino-6-(D-ribitylamino)uracil from GTP: step 1/4. In terms of biological role, catalyzes the conversion of D-ribulose 5-phosphate to formate and 3,4-dihydroxy-2-butanone 4-phosphate. Its function is as follows. Catalyzes the conversion of GTP to 2,5-diamino-6-ribosylamino-4(3H)-pyrimidinone 5'-phosphate (DARP), formate and pyrophosphate. This chain is Riboflavin biosynthesis protein RibBA, found in Salinispora tropica (strain ATCC BAA-916 / DSM 44818 / JCM 13857 / NBRC 105044 / CNB-440).